The following is a 282-amino-acid chain: Phosphatidylglycerol--prolipoprotein diacylglyceryl transferase (282 aa).

4 helical membrane passes run 19-39 (IGPITIRWYGLLIATAVLIGV), 59-79 (LSIWLVIGAIPAARIYYVLFQ), 90-110 (IIAIWQGGIAIHGAIIGGTLA), and 120-140 (VPFWQLADLVAPSLILGQAIG). A 1,2-diacyl-sn-glycero-3-phospho-(1'-sn-glycerol) is bound at residue Arg141. 3 consecutive transmembrane segments (helical) span residues 181 to 201 (TFLYESIWDLMVFALLITLFF), 212 to 232 (VGTLFMVYLATYSLGRLWIEG), and 245 to 265 (IAQVVSLTGITLGLAGLAWLY).

The protein belongs to the Lgt family.

The protein localises to the cell inner membrane. The enzyme catalyses L-cysteinyl-[prolipoprotein] + a 1,2-diacyl-sn-glycero-3-phospho-(1'-sn-glycerol) = an S-1,2-diacyl-sn-glyceryl-L-cysteinyl-[prolipoprotein] + sn-glycerol 1-phosphate + H(+). It functions in the pathway protein modification; lipoprotein biosynthesis (diacylglyceryl transfer). Catalyzes the transfer of the diacylglyceryl group from phosphatidylglycerol to the sulfhydryl group of the N-terminal cysteine of a prolipoprotein, the first step in the formation of mature lipoproteins. The sequence is that of Phosphatidylglycerol--prolipoprotein diacylglyceryl transferase from Trichormus variabilis (strain ATCC 29413 / PCC 7937) (Anabaena variabilis).